The following is a 77-amino-acid chain: UPF0401 protein c0279 (77 aa).

This sequence belongs to the UPF0401 family.

The chain is UPF0401 protein c0279 from Escherichia coli O6:H1 (strain CFT073 / ATCC 700928 / UPEC).